The primary structure comprises 258 residues: Imidazole glycerol phosphate synthase subunit HisF (258 aa).

Active-site residues include D11 and D130.

The protein belongs to the HisA/HisF family. As to quaternary structure, heterodimer of HisH and HisF.

Its subcellular location is the cytoplasm. The enzyme catalyses 5-[(5-phospho-1-deoxy-D-ribulos-1-ylimino)methylamino]-1-(5-phospho-beta-D-ribosyl)imidazole-4-carboxamide + L-glutamine = D-erythro-1-(imidazol-4-yl)glycerol 3-phosphate + 5-amino-1-(5-phospho-beta-D-ribosyl)imidazole-4-carboxamide + L-glutamate + H(+). It participates in amino-acid biosynthesis; L-histidine biosynthesis; L-histidine from 5-phospho-alpha-D-ribose 1-diphosphate: step 5/9. In terms of biological role, IGPS catalyzes the conversion of PRFAR and glutamine to IGP, AICAR and glutamate. The HisF subunit catalyzes the cyclization activity that produces IGP and AICAR from PRFAR using the ammonia provided by the HisH subunit. This chain is Imidazole glycerol phosphate synthase subunit HisF, found in Escherichia coli O6:K15:H31 (strain 536 / UPEC).